Reading from the N-terminus, the 339-residue chain is Lipoate--protein ligase (339 aa).

Positions 31 to 221 constitute a BPL/LPL catalytic domain; it reads FLDDDILFPY…QLLQIETISQ (191 aa). ATP-binding positions include R73, 78–81, K135, and A139; that span reads GAVY. K135 serves as a coordination point for (R)-lipoate.

This sequence belongs to the LplA family.

It carries out the reaction L-lysyl-[lipoyl-carrier protein] + (R)-lipoate + ATP = N(6)-[(R)-lipoyl]-L-lysyl-[lipoyl-carrier protein] + AMP + diphosphate + H(+). It participates in protein modification; protein lipoylation via exogenous pathway; protein N(6)-(lipoyl)lysine from lipoate: step 1/2. It functions in the pathway protein modification; protein lipoylation via exogenous pathway; protein N(6)-(lipoyl)lysine from lipoate: step 2/2. Its function is as follows. Catalyzes specifically the lipoylation of GcvH-L (SpyM50867), likely via the ATP-dependent activation of lipoate to lipoyl-AMP and the transfer of the activated lipoyl onto the lipoyl domain of the target protein. The protein is Lipoate--protein ligase of Streptococcus pyogenes serotype M5 (strain Manfredo).